The chain runs to 469 residues: 3-isopropylmalate dehydratase large subunit (469 aa).

Cys347, Cys407, and Cys410 together coordinate [4Fe-4S] cluster.

The protein belongs to the aconitase/IPM isomerase family. LeuC type 1 subfamily. Heterodimer of LeuC and LeuD. Requires [4Fe-4S] cluster as cofactor.

The enzyme catalyses (2R,3S)-3-isopropylmalate = (2S)-2-isopropylmalate. Its pathway is amino-acid biosynthesis; L-leucine biosynthesis; L-leucine from 3-methyl-2-oxobutanoate: step 2/4. Its function is as follows. Catalyzes the isomerization between 2-isopropylmalate and 3-isopropylmalate, via the formation of 2-isopropylmaleate. The chain is 3-isopropylmalate dehydratase large subunit from Sorangium cellulosum (strain So ce56) (Polyangium cellulosum (strain So ce56)).